The following is a 561-amino-acid chain: ATP-dependent rRNA helicase RRP3 (561 aa).

2 stretches are compositionally biased toward low complexity: residues 1 to 23 (MPKASASSAKMTASTSNVSSSNS) and 30 to 45 (ASSPSASPEVSTPSTS). The segment at 1 to 109 (MPKASASSAK…DEKKVATIAD (109 aa)) is disordered. Positions 100 to 109 (DEKKVATIAD) are enriched in basic and acidic residues. The short motif at 114 to 142 (VEFSDLGVIPQIVEACTNMGFKHPTPIQV) is the Q motif element. In terms of domain architecture, Helicase ATP-binding spans 145 to 316 (IPEALQARDV…RASLKNPVRV (172 aa)). 158-165 (AQTGSGKT) lines the ATP pocket. The DEAD box motif lies at 264–267 (DEAD). The 149-residue stretch at 339 to 487 (HKDTYLVHLA…EFPGGNDKEA (149 aa)) folds into the Helicase C-terminal domain. A disordered region spans residues 506-561 (LKDKGVGSAGGSGKRKRKMDGKYGDDMDRDDDQVQAGLPVSGNGRHQNQNRKKGRR).

The protein belongs to the DEAD box helicase family. DDX47/RRP3 subfamily. In terms of assembly, interacts with the SSU processome.

It is found in the nucleus. It carries out the reaction ATP + H2O = ADP + phosphate + H(+). ATP-dependent rRNA helicase required for pre-ribosomal RNA processing. Involved in the maturation of the 35S-pre-rRNA and to its cleavage to mature 18S rRNA. This is ATP-dependent rRNA helicase RRP3 from Mycosarcoma maydis (Corn smut fungus).